The chain runs to 1078 residues: Transmembrane protein 132B (1078 aa).

Residues 1 to 903 (MFGAASRMDT…LTDLEIGMYA (903 aa)) lie on the Extracellular side of the membrane. Residues asparagine 343, asparagine 366, and asparagine 381 are each glycosylated (N-linked (GlcNAc...) asparagine). A disordered region spans residues 834-887 (RGTPVGQEESTNKSTTPQSPMEGKNKLLKSGGPDAFTSFPTQGKSPDPNNPSDL). A compositionally biased stretch (polar residues) spans 841 to 852 (EESTNKSTTPQS). Residues 904 to 924 (LLCVFCLAILVFLINCVAFAW) form a helical membrane-spanning segment. At 925–1078 (KYRHKRFAVS…DYMESLQDQM (154 aa)) the chain is on the cytoplasmic side.

The protein belongs to the TMEM132 family.

The protein localises to the membrane. The chain is Transmembrane protein 132B (TMEM132B) from Homo sapiens (Human).